A 336-amino-acid chain; its full sequence is Solute-binding protein Csal_2479 (336 aa).

The signal sequence occupies residues 1 to 33 (MQTNKRLKMASCVKAAAMLGMLLSVSISTTAQA). Beta-D-glucuronate is bound by residues H42, Q80, R156, R177, Y200, 217–218 (NN), and E244.

This sequence belongs to the bacterial solute-binding protein 7 family. In terms of assembly, the complex is comprised of an extracytoplasmic solute-binding protein and a heteromeric permease formed by two transmembrane proteins.

The protein resides in the periplasm. Functionally, solute-binding protein that binds D-glucuronate (in vitro). Probably part of a tripartite ATP-independent periplasmic (TRAP) transport system that mediates solute transport into the cytoplasm. This is Solute-binding protein Csal_2479 from Chromohalobacter salexigens (strain ATCC BAA-138 / DSM 3043 / CIP 106854 / NCIMB 13768 / 1H11).